Here is a 132-residue protein sequence, read N- to C-terminus: Large ribosomal subunit protein uL14 (132 aa).

This sequence belongs to the universal ribosomal protein uL14 family. In terms of assembly, part of the 50S ribosomal subunit. Forms a cluster with proteins L3 and L24e, part of which may contact the 16S rRNA in 2 intersubunit bridges.

In terms of biological role, binds to 23S rRNA. Forms part of two intersubunit bridges in the 70S ribosome. The protein is Large ribosomal subunit protein uL14 of Methanococcus maripaludis (strain DSM 14266 / JCM 13030 / NBRC 101832 / S2 / LL).